A 146-amino-acid polypeptide reads, in one-letter code: Hemoglobin subunit beta (146 aa).

At Val1 the chain carries N-acetylvaline. Positions 2-146 (HLTGEEKSAV…VANALAHKYH (145 aa)) constitute a Globin domain. Thr12 carries the post-translational modification Phosphothreonine. At Ser44 the chain carries Phosphoserine. The residue at position 59 (Lys59) is an N6-acetyllysine. His63 contributes to the heme b binding site. N6-acetyllysine is present on Lys82. His92 contributes to the heme b binding site. Cys93 bears the S-nitrosocysteine mark. Residue Lys144 is modified to N6-acetyllysine.

It belongs to the globin family. As to quaternary structure, heterotetramer of two alpha chains and two beta chains. As to expression, red blood cells.

In terms of biological role, involved in oxygen transport from the lung to the various peripheral tissues. This is Hemoglobin subunit beta (HBB) from Mico argentatus (Silvery marmoset).